The following is a 153-amino-acid chain: Mediator of RNA polymerase II transcription subunit 22 (153 aa).

This sequence belongs to the Mediator complex subunit 22 family. As to quaternary structure, component of the Mediator complex.

It localises to the nucleus. Component of the Mediator complex, a coactivator involved in the regulated transcription of nearly all RNA polymerase II-dependent genes. Mediator functions as a bridge to convey information from gene-specific regulatory proteins to the basal RNA polymerase II transcription machinery. Mediator is recruited to promoters by direct interactions with regulatory proteins and serves as a scaffold for the assembly of a functional preinitiation complex with RNA polymerase II and the general transcription factors. The sequence is that of Mediator of RNA polymerase II transcription subunit 22 (mdt-22) from Caenorhabditis briggsae.